A 185-amino-acid chain; its full sequence is Ribosome-recycling factor (185 aa).

Belongs to the RRF family.

It localises to the cytoplasm. In terms of biological role, responsible for the release of ribosomes from messenger RNA at the termination of protein biosynthesis. May increase the efficiency of translation by recycling ribosomes from one round of translation to another. This is Ribosome-recycling factor from Syntrophus aciditrophicus (strain SB).